The primary structure comprises 677 residues: MAKLLLLHAPHVIPRFSSSSSRSLVSAAALYRRPLLVNPQFSHIGPRLHSPYNRRFSARAFDDSPASSAEMEKEKQEQLLDGVSGKKDEDYPTGEMEYENRNAWEIFVVKFRMLFAYPWQRVRKGSVLTMTLRGQISDQLKSRFNSGLSLPQLSENFVKAAYDPRIAGVYLHIDPLSCGWGKVEEIRRHILNFKKSGKFIVGYISICGLKEYYLGCACNELFAPPSAYSFLYGLTVQASFLGGVFEKVGIEPQVQRIGKYKSAGDQLSRKSISEENYEMLSVLLDNIYSNWLDGVSDATGKKREDVENFINQGVYEIEKLKEAGLIKDIRYDDEVITMLKERLGVEKDKKLPTVDYKKYSGVKKWTLGLTGGRDQIAIIRAGGSISRVKGPLSTPGSAIIAEQLIEKIRSVRESKKYKAAIIRIDSPGGDALASDLMWREIKLLAETKPVIASMSDVAASGGYYMAMAANAIVAENLTLTGSIGVVTARFTLAKLYEKIGFNKETISRGKYAELLGAEERPLKPEEAELFEKSAQHAYQLFRDKAALSRSMPVDKMEEVAQGRVWTGKDAHSRGLIDAVGGLSRAIAIAKQKANIPLNKKVTLVELSRPSTSLPDILSGIGSSVIGVDRTLKGLLDELTITEGVQARMDGIMFQQLGRDSLATPIIDMLKDYLSSLR.

The transit peptide at 1 to 68 (MAKLLLLHAP…RAFDDSPASS (68 aa)) directs the protein to the chloroplast. Residues 63-94 (DSPASSAEMEKEKQEQLLDGVSGKKDEDYPTG) form a disordered region. The segment covering 70-90 (EMEKEKQEQLLDGVSGKKDED) has biased composition (basic and acidic residues). Residue Ser-460 is the Nucleophile of the active site.

The protein belongs to the peptidase S49 family.

The protein resides in the plastid. It localises to the chloroplast stroma. It is found in the chloroplast thylakoid membrane. Functionally, serine protease that may be involved in the light-dependent degradation of antenna and photosystem II in chloroplasts. May function during high light acclimation in plastids. The protein is Serine protease SPPA, chloroplastic (SPPA) of Arabidopsis thaliana (Mouse-ear cress).